Reading from the N-terminus, the 264-residue chain is MKQYLELMQKVLDEGTQKNDRTGTGTLSIFGHQMRFNLQEGFPLVTTKRCHLRSIIHELLWFLQGDTNIAYLHENNVTIWDEWADENGDLGPVYGKQWRAWPTPDGRHIDQITTVLNQLKNDPDSRRIIVSAWNVGELDKMALAPCHAFFQFYVADGKLSCQLYQRSCDVFLGLPFNIASYALLVHMMAQQCDLEVGDFVWTGGDTHLYSNHMDQTHLQLSREPRSLPKLIIKRKPESIFDYRFEDFEIEGYDPHPGIKAPVAI.

Arg-21 contributes to the dUMP binding site. Position 51 (His-51) interacts with (6R)-5,10-methylene-5,6,7,8-tetrahydrofolate. 126–127 is a binding site for dUMP; the sequence is RR. Cys-146 (nucleophile) is an active-site residue. DUMP is bound by residues 166 to 169, Asn-177, and 207 to 209; these read RSCD and HLY. Asp-169 serves as a coordination point for (6R)-5,10-methylene-5,6,7,8-tetrahydrofolate. A (6R)-5,10-methylene-5,6,7,8-tetrahydrofolate-binding site is contributed by Ala-263.

This sequence belongs to the thymidylate synthase family. Bacterial-type ThyA subfamily. In terms of assembly, homodimer.

The protein localises to the cytoplasm. The catalysed reaction is dUMP + (6R)-5,10-methylene-5,6,7,8-tetrahydrofolate = 7,8-dihydrofolate + dTMP. Its pathway is pyrimidine metabolism; dTTP biosynthesis. In terms of biological role, catalyzes the reductive methylation of 2'-deoxyuridine-5'-monophosphate (dUMP) to 2'-deoxythymidine-5'-monophosphate (dTMP) while utilizing 5,10-methylenetetrahydrofolate (mTHF) as the methyl donor and reductant in the reaction, yielding dihydrofolate (DHF) as a by-product. This enzymatic reaction provides an intracellular de novo source of dTMP, an essential precursor for DNA biosynthesis. In Escherichia fergusonii (strain ATCC 35469 / DSM 13698 / CCUG 18766 / IAM 14443 / JCM 21226 / LMG 7866 / NBRC 102419 / NCTC 12128 / CDC 0568-73), this protein is Thymidylate synthase.